Consider the following 122-residue polypeptide: MIQSQTHLNVADNSGARELMCIRIIGTSNRRYAHIGDIIIAVIKEAVPNSPLERSEVIRAVIVRTSKELKRDNGMIIRYDDNAAVVIDQEGNPKGTRIFGAIARELRQLNFTKIVSLAPEVL.

Belongs to the universal ribosomal protein uL14 family. Part of the 50S ribosomal subunit.

The protein localises to the plastid. Its subcellular location is the chloroplast. Functionally, binds to 23S rRNA. The sequence is that of Large ribosomal subunit protein uL14c from Populus trichocarpa (Western balsam poplar).